The sequence spans 327 residues: Tartrate-resistant acid phosphatase type 5 (327 aa).

The first 22 residues, 1 to 22 (MDTWMVLLGLQILLLPLLAHCT), serve as a signal peptide directing secretion. 4 residues coordinate Fe cation: Asp-35, Asp-73, Tyr-76, and Asn-112. 2 N-linked (GlcNAc...) asparagine glycosylation sites follow: Asn-118 and Asn-149. The cysteines at positions 163 and 221 are disulfide-linked. Fe cation contacts are provided by His-207, His-242, and His-244.

Exists either as monomer or, after proteolytic processing, as a dimer of two chains linked by disulfide bond(s). It depends on Fe cation as a cofactor. As to expression, characteristic constituent of osteoclasts and some mononuclear preosteoclasts. Preferentially expressed in skeletal tissues.

Its subcellular location is the lysosome. The catalysed reaction is a phosphate monoester + H2O = an alcohol + phosphate. Functionally, may play a role in the process of bone resorption. The osteoclastic trap acts on nucleotide tri- and diphosphates with higher affinity, compared with other substrates. This chain is Tartrate-resistant acid phosphatase type 5 (Acp5), found in Rattus norvegicus (Rat).